A 162-amino-acid chain; its full sequence is UPF0254 protein MTH1148 homolog (162 aa).

This sequence belongs to the UPF0254 family.

In Methanothermobacter thermautotrophicus (strain Winter) (Methanobacterium thermoautotrophicum), this protein is UPF0254 protein MTH1148 homolog.